A 134-amino-acid polypeptide reads, in one-letter code: Transcription factor atoh7 (134 aa).

The tract at residues methionine 1–methionine 27 is disordered. Positions serine 15 to methionine 27 are enriched in basic and acidic residues. Residues arginine 28–leucine 80 enclose the bHLH domain.

It is found in the nucleus. The protein localises to the perikaryon. The protein resides in the cell projection. Its subcellular location is the axon. In terms of biological role, transcription factor that binds to DNA at the consensus sequence 5'-CAG[GC]TG-3'. Involved in the differentiation of retinal ganglion cells, photoreceptor population and optic nerve development. Required for retinal circadian rhythm photoentrainment. This Danio rerio (Zebrafish) protein is Transcription factor atoh7.